We begin with the raw amino-acid sequence, 226 residues long: 7-cyano-7-deazaguanine synthase (226 aa).

8–18 (ISGGLDSTTCL) contributes to the ATP binding site. Residues Cys188, Cys198, Cys201, and Cys204 each contribute to the Zn(2+) site.

This sequence belongs to the QueC family. It depends on Zn(2+) as a cofactor.

The catalysed reaction is 7-carboxy-7-deazaguanine + NH4(+) + ATP = 7-cyano-7-deazaguanine + ADP + phosphate + H2O + H(+). Its pathway is purine metabolism; 7-cyano-7-deazaguanine biosynthesis. In terms of biological role, catalyzes the ATP-dependent conversion of 7-carboxy-7-deazaguanine (CDG) to 7-cyano-7-deazaguanine (preQ(0)). The sequence is that of 7-cyano-7-deazaguanine synthase from Coxiella burnetii (strain RSA 331 / Henzerling II).